A 466-amino-acid polypeptide reads, in one-letter code: Putative ABC transporter ATP-binding protein MG065 (466 aa).

One can recognise an ABC transporter domain in the interval 233–463; sequence IELKNVYKYI…NLNPKQVEEI (231 aa). Residue 269-276 coordinates ATP; sequence GPSGSGKT.

This sequence belongs to the ABC transporter superfamily.

This Mycoplasma genitalium (strain ATCC 33530 / DSM 19775 / NCTC 10195 / G37) (Mycoplasmoides genitalium) protein is Putative ABC transporter ATP-binding protein MG065.